Consider the following 419-residue polypeptide: Effector protein BipC (419 aa).

2 disordered regions span residues 62–94 and 338–402; these read VAGSGAQRVELARPKPDAQTRATDRRTVSGLER and LQSG…AKSQ. Basic and acidic residues-rich tracts occupy residues 71-94 and 380-392; these read ELARPKPDAQTRATDRRTVSGLER and TRDEAAHRSREAA.

Belongs to the SctB/SipC family.

Its subcellular location is the secreted. This is Effector protein BipC (bipC) from Burkholderia pseudomallei (strain 1710b).